Here is a 1313-residue protein sequence, read N- to C-terminus: Inactive protein tyrosine kinase pTKL (1313 aa).

MORN repeat units lie at residues 20-42 and 45-63; these read YAGD…ENGN and FGHF…IDKN. Asparagine 63, asparagine 131, asparagine 178, asparagine 208, asparagine 254, asparagine 260, and asparagine 288 each carry an N-linked (GlcNAc...) asparagine glycan. An SAM domain is found at 300-365; that stretch reads WNKEQVAQWL…LQLIKNLRVT (66 aa). N-linked (GlcNAc...) asparagine glycans are attached at residues asparagine 466, asparagine 516, asparagine 525, asparagine 528, and asparagine 534. The segment covering 569 to 580 has biased composition (basic and acidic residues); it reads EPIKPNKEKEEN. Positions 569–631 are disordered; sequence EPIKPNKEKE…SEKSSETSSE (63 aa). A compositionally biased stretch (polar residues) spans 586 to 604; it reads PIINSKNETNLLNDSNPTK. Asparagine 592, asparagine 598, asparagine 661, asparagine 678, asparagine 729, asparagine 735, and asparagine 749 each carry an N-linked (GlcNAc...) asparagine glycan. Residue lysine 782 participates in ATP binding. N-linked (GlcNAc...) asparagine glycans are attached at residues asparagine 790, asparagine 868, asparagine 940, asparagine 983, and asparagine 1000. The Protein kinase domain occupies 962–1294; that stretch reads FRNKNNILCG…FDRILIEISM (333 aa). Positions 1052–1055 match the RVxF motif motif; it reads KILF. 2 N-linked (GlcNAc...) asparagine glycosylation sites follow: asparagine 1191 and asparagine 1198.

It belongs to the protein kinase superfamily. TKL Ser/Thr protein kinase family.

Its subcellular location is the parasitophorous vacuole. It is found in the host cell membrane. The protein resides in the host cytoplasm. It localises to the host cytoskeleton. The protein is Inactive protein tyrosine kinase pTKL of Plasmodium berghei (strain Anka).